The primary structure comprises 149 residues: Glycine cleavage system H protein (149 aa).

The Lipoyl-binding domain occupies 23-104 (LIWVGISNHA…PYGIWLFKIN (82 aa)). The residue at position 64 (K64) is an N6-lipoyllysine.

This sequence belongs to the GcvH family. The glycine cleavage system is composed of four proteins: P, T, L and H. (R)-lipoate serves as cofactor.

Its function is as follows. The glycine cleavage system catalyzes the degradation of glycine. The H protein shuttles the methylamine group of glycine from the P protein to the T protein. The protein is Glycine cleavage system H protein of Polynucleobacter necessarius subsp. necessarius (strain STIR1).